Here is a 443-residue protein sequence, read N- to C-terminus: Protein Z-dependent protease inhibitor (443 aa).

The first 23 residues, 1-23 (MKVVPSLLLSVLLAQVWLVPGLA), serve as a signal peptide directing secretion. Residues 24-66 (PSPQSPETPAPQNQTSRVVQAPREEEEDEQEASEEKAGDEEKA) are disordered. N-linked (GlcNAc...) asparagine glycosylation occurs at Asn36. Ser56 is modified (phosphoserine). The segment covering 56–66 (SEEKAGDEEKA) has biased composition (basic and acidic residues). Residues 136–153 (TKPGLLPSLFKGLRETLS) are heparin-binding. Asn180 and Asn295 each carry an N-linked (GlcNAc...) asparagine glycan.

It belongs to the serpin family. Post-translationally, phosphorylated by FAM20C in the extracellular medium.

It localises to the secreted. In terms of biological role, inhibits activity of the coagulation protease factor Xa in the presence of PROZ, calcium and phospholipids. Also inhibits factor XIa in the absence of cofactors. This Pongo abelii (Sumatran orangutan) protein is Protein Z-dependent protease inhibitor (SERPINA10).